We begin with the raw amino-acid sequence, 624 residues long: MNAANRRKSTSTVGITGRKDATRMKIEQMEKERKERRKTMMQRKEARKQEHMKNIEAGNPGDVDFIGLVEEWRREQENKIGDKSPPSLFASTNSNICIAVRKRPISDKERQKLDHDSVSCFQNKVWIHSAKLKVDGITKYLTHNSFQLDHTFGEDSTTEQIYLATTLPLVDHVVSTQGRATVFCYGQTGSGKTYTMNGIQQILAYDLYGQLAEHTDDLEITVAFFELYSGNVLDLLHGCQRCKLLEDGNGEVNITGLREVPAPTPEAFLQVIEEGHSLRTTQKTEANDASSRSHAICQVFLRDYGGNLRGKLGLVDLAGSERGSDTKQHNSQRRTESADINTSLLALKECIRALGQKSAHVPYRGSKLTLILKDCFSPDSKTTMVATVSPGASAADHSLNTLRYADRIKEQRVSSNGQRGKAAKASNREIMPSKERLMRIAAATEQADDQHSAFVQKMLAEHDQVQADANDYAFTEQVDEEEADDEEGDYEEESEDLDYEDSEGQDYEEAVESQYDHSQEAQEGEEELRRTVQAVFELEEALLNQHMSNIQANAEMLTQEGKLLQSVQAGGLSEDEMHNYAIQLAEFLDKKESLIYKLQSKLDEFQEQLAREQELARQVQLTQY.

Residues 1-59 (MNAANRRKSTSTVGITGRKDATRMKIEQMEKERKERRKTMMQRKEARKQEHMKNIEAGN) are disordered. Positions 1-85 (MNAANRRKST…QENKIGDKSP (85 aa)) are globular. Basic and acidic residues-rich tracts occupy residues 17 to 33 (GRKDATRMKIEQMEKER) and 42 to 54 (QRKEARKQEHMKN). One can recognise a Kinesin motor domain in the interval 95–411 (NICIAVRKRP…LRYADRIKEQ (317 aa)). 186-193 (GQTGSGKT) contacts ATP. Residues 426-624 (SNREIMPSKE…LARQVQLTQY (199 aa)) adopt a coiled-coil conformation. A compositionally biased stretch (acidic residues) spans 478 to 511 (VDEEEADDEEGDYEEESEDLDYEDSEGQDYEEAV). Positions 478–528 (VDEEEADDEEGDYEEESEDLDYEDSEGQDYEEAVESQYDHSQEAQEGEEEL) are disordered.

The protein belongs to the TRAFAC class myosin-kinesin ATPase superfamily. Kinesin family. MCAK/KIF2 subfamily.

It is found in the cytoplasm. Its subcellular location is the cytoskeleton. Its function is as follows. Involved in anaphase spindle elongation. The chain is Diatom spindle kinesin-1 (DSK1) from Cylindrotheca fusiformis (Marine diatom).